The following is a 332-amino-acid chain: MAVFTAVSDSDLAQWMRHYELGDVLAFRGIPSGIENSNFFLTTTRGEYVLTIFEKLTAQQLPFYLDLMRHLAAHGVPVPDPIPRDDGALFGELHGKPAAIVTKLDGAAELAPGVEHCIEVGQMLARLHLAGRDYPRNQPNLRSLPWWQENVPAIVPFITDAQRALLEGELAHQAGFFASDDYAALPAGPCHCDLFRDNVLFAHAAPGTGHDVRLGGFFDFYFAGCDKWLFDVAVTVNDWCVDLATGVLDVARADALLRAYQTVRPFTAEERRHWSDMLRAGAYRFWVSRLYDFYLPRAAEMLKPHDPGHFERILRERIAHTPALPEIQTACN.

The protein belongs to the pseudomonas-type ThrB family.

It catalyses the reaction L-homoserine + ATP = O-phospho-L-homoserine + ADP + H(+). It participates in amino-acid biosynthesis; L-threonine biosynthesis; L-threonine from L-aspartate: step 4/5. This chain is Homoserine kinase, found in Burkholderia cenocepacia (strain HI2424).